The sequence spans 160 residues: 6,7-dimethyl-8-ribityllumazine synthase (160 aa).

Residues Trp-28, 59-61 (ALE), and 81-83 (CVI) contribute to the 5-amino-6-(D-ribitylamino)uracil site. 86–87 (ET) provides a ligand contact to (2S)-2-hydroxy-3-oxobutyl phosphate. The active-site Proton donor is the His-89. Asn-114 contributes to the 5-amino-6-(D-ribitylamino)uracil binding site. Arg-128 contacts (2S)-2-hydroxy-3-oxobutyl phosphate.

It belongs to the DMRL synthase family.

The catalysed reaction is (2S)-2-hydroxy-3-oxobutyl phosphate + 5-amino-6-(D-ribitylamino)uracil = 6,7-dimethyl-8-(1-D-ribityl)lumazine + phosphate + 2 H2O + H(+). It participates in cofactor biosynthesis; riboflavin biosynthesis; riboflavin from 2-hydroxy-3-oxobutyl phosphate and 5-amino-6-(D-ribitylamino)uracil: step 1/2. Functionally, catalyzes the formation of 6,7-dimethyl-8-ribityllumazine by condensation of 5-amino-6-(D-ribitylamino)uracil with 3,4-dihydroxy-2-butanone 4-phosphate. This is the penultimate step in the biosynthesis of riboflavin. The polypeptide is 6,7-dimethyl-8-ribityllumazine synthase (Corynebacterium urealyticum (strain ATCC 43042 / DSM 7109)).